The chain runs to 475 residues: UDP-N-acetylmuramoylalanine--D-glutamate ligase (475 aa).

G130 to T136 provides a ligand contact to ATP.

This sequence belongs to the MurCDEF family.

The protein resides in the cytoplasm. It carries out the reaction UDP-N-acetyl-alpha-D-muramoyl-L-alanine + D-glutamate + ATP = UDP-N-acetyl-alpha-D-muramoyl-L-alanyl-D-glutamate + ADP + phosphate + H(+). It functions in the pathway cell wall biogenesis; peptidoglycan biosynthesis. Cell wall formation. Catalyzes the addition of glutamate to the nucleotide precursor UDP-N-acetylmuramoyl-L-alanine (UMA). The sequence is that of UDP-N-acetylmuramoylalanine--D-glutamate ligase from Corynebacterium efficiens (strain DSM 44549 / YS-314 / AJ 12310 / JCM 11189 / NBRC 100395).